The primary structure comprises 558 residues: MPWRRRRNRVSALEGGREEEAPPEAAAVPPALLTSPQQTEAAAERILLRGIFEIGRDSCDVVLSERALRWRPIQPERPAGDSKYDLLCKEEFIELKDIFSVKLKRRCSVKQQRSGTLLGITLFICLKKEQNKLKNSTLDLINLSEDHCDIWFRQFKKILAGFPNRPKSLKILLNPQSHKKEATQVYYEKVEPLLKLAGIKTDVTIMEYEGHALSLLKECELQGFDGGHRKPLFAIHWSVQRLFTGMQTLEPSVVCVGGDGSASEVAHALLLRAQKNAGMETDRILTPVRAQLPLGLIPAGSTNVLAHSLHGVPHVITATLHIIMGHVQLVDVCTFSTAGKLLRFGFSAMFGFGGRTLALAEKYRWMSPNQRRDFAVVKALAKLKAEDCEISFLPFNSSDDVQERRAQGSPKSDCNDQWQMIQGQFLNVSIMAIPCLCSVAPRGLAPNTRLNNGSMALIIARNTSRPEFIKHLKRYASVKNQFNFPFVETYTVEEVKVHPRNNTGGYNPEEEEDETASENCFPWNVDGDLMEVASEVHIRLHPRLISLYGGSMEEMIPK.

Positions 1 to 36 (MPWRRRRNRVSALEGGREEEAPPEAAAVPPALLTSP) are disordered. 2 short sequence motifs (nuclear localization signal) span residues 2 to 9 (PWRRRRNR) and 102 to 106 (KLKRR). The region spanning 164–339 (NRPKSLKILL…VDVCTFSTAG (176 aa)) is the DAGKc domain.

Phosphorylated on serine residues. In terms of tissue distribution, isoform 1 and isoform 2 are expressed in adult retina, liver and pancreas as well as in fetal brain, lung and kidney. Isoform 3 is expressed in adult retina as well as in fetal lung and liver. Isoform 4 is expressed in adult retina, lung and kidney as well as in fetal lung and liver. Moderately expressed in retina, kidney, lung, testis, trachea, and pancreas. Weakly expressed in brain, placenta and liver.

It is found in the cytoplasm. The protein localises to the nucleus. Its subcellular location is the nucleolus. It localises to the golgi apparatus. The protein resides in the trans-Golgi network. It is found in the endoplasmic reticulum. Its function is as follows. Has no detectable ceramide-kinase activity. Overexpression of CERKL protects cells from apoptosis in oxidative stress conditions. The sequence is that of Ceramide kinase-like protein (CERKL) from Homo sapiens (Human).